Consider the following 383-residue polypeptide: Sulfate adenylyltransferase (383 aa).

This sequence belongs to the sulfate adenylyltransferase family.

It carries out the reaction sulfate + ATP + H(+) = adenosine 5'-phosphosulfate + diphosphate. Its pathway is sulfur metabolism; hydrogen sulfide biosynthesis; sulfite from sulfate: step 1/3. The polypeptide is Sulfate adenylyltransferase (Halothermothrix orenii (strain H 168 / OCM 544 / DSM 9562)).